A 313-amino-acid polypeptide reads, in one-letter code: Small glutamine-rich tetratricopeptide repeat-containing protein alpha (313 aa).

The segment at 69-97 (KELPPDLRSPQETPPSEEDSAEAERLKTE) is disordered. Serine 77 carries the phosphoserine modification. Threonine 81 bears the Phosphothreonine mark. Position 84 is a phosphoserine (serine 84). TPR repeat units follow at residues 91-124 (AERL…NPAN), 125-158 (AVYF…DPSY), and 159-192 (SKAY…DPDN). Lysine 137 carries the post-translational modification N6-acetyllysine. Phosphoserine is present on serine 301. Threonine 303 carries the post-translational modification Phosphothreonine. At serine 305 the chain carries Phosphoserine.

It belongs to the SGT family. As to quaternary structure, homodimer. Homooligomer. Interacts with DNAJC5 and DNAJC5B. Interacts (via TPR repeats) with HSP90AA1. Interacts (via Gln-rich region) with SLC2A1. Interacts with HSP90AB1. Interacts (via TPR repeats) with HSPA8/Hsc70; the interaction is direct. Interacts with BAG6 (via ubiquitin-like domain); interaction prevents interaction between BAG6 and RNF126. Forms a multiprotein complex, at least composed of DNAJB12, DNAJB14, HSPA8/Hsc70 and SGTA; interaction with DNAJB14 and HSPA8/Hsc70 is direct.

It localises to the cytoplasm. It is found in the nucleus. In terms of biological role, co-chaperone that binds misfolded and hydrophobic patches-containing client proteins in the cytosol. Mediates their targeting to the endoplasmic reticulum but also regulates their sorting to the proteasome when targeting fails. Functions in tail-anchored/type II transmembrane proteins membrane insertion constituting with ASNA1 and the BAG6 complex a targeting module. Functions upstream of the BAG6 complex and ASNA1, binding more rapidly the transmembrane domain of newly synthesized proteins. It is also involved in the regulation of the endoplasmic reticulum-associated misfolded protein catabolic process via its interaction with BAG6: collaborates with the BAG6 complex to maintain hydrophobic substrates in non-ubiquitinated states. Competes with RNF126 for interaction with BAG6, preventing the ubiquitination of client proteins associated with the BAG6 complex. Binds directly to HSC70 and HSP70 and regulates their ATPase activity. The polypeptide is Small glutamine-rich tetratricopeptide repeat-containing protein alpha (SGTA) (Bos taurus (Bovine)).